Reading from the N-terminus, the 175-residue chain is uncharacterized protein (175 aa).

Transmembrane regions (helical) follow at residues 21–41 and 50–70; these read IVLDFPSFLVGCVFTTMMGPI and LVGLITVCKFLVIIGSIVFVI.

The protein localises to the membrane. This is an uncharacterized protein from Saccharomyces cerevisiae (strain ATCC 204508 / S288c) (Baker's yeast).